The following is a 655-amino-acid chain: Fidgetin-like protein 1 (655 aa).

The tract at residues 289-313 (QQKKHSNQPQRNPGPLYGGGKKSLG) is disordered. Residues Ala385 and 425 to 430 (GTGKTL) contribute to the ATP site.

It belongs to the AAA ATPase family. In terms of assembly, hexamer. Mg(2+) is required as a cofactor.

It localises to the nucleus. It is found in the cytoplasm. The protein resides in the perinuclear region. The catalysed reaction is ATP + H2O = ADP + phosphate + H(+). Its function is as follows. May be involved in DNA double-strand break (DBS) repair via homologous recombination (HR). May regulate osteoblast proliferation and differentiation. This is Fidgetin-like protein 1 (fignl1) from Xenopus laevis (African clawed frog).